A 622-amino-acid chain; its full sequence is Probable potassium transport system protein Kup (622 aa).

Transmembrane regions (helical) follow at residues 8–28 (LAALTLGAIGVVYGDIGTSVL), 50–70 (ILSIFFWTLTVIVSLKYVVLV), 103–123 (LAVGIFGTSLFYGDGVITPAI), 137–157 (PHFKKYVIPITLVVLFCLFAV), 168–188 (FFGPITLVWFASIALLGLAHI), 203–223 (ALGFMFANPGTSFIILGAVVL), 247–267 (WFGVAMPALTLNYFGQGALLL), 285–305 (ALIPLVVLATMATVIASQALI), 337–357 (IYMPLVNWGLFVAIVLAVVMF), 366–386 (AYGIAVTLDMLITTTLTFFVI), 393–413 (PLALCVAATGCFAVVDLAFFA), and 419–439 (LFQGGWFPLMIGGIVFALMMT).

This sequence belongs to the HAK/KUP transporter (TC 2.A.72) family.

It is found in the cell inner membrane. It catalyses the reaction K(+)(in) + H(+)(in) = K(+)(out) + H(+)(out). Functionally, transport of potassium into the cell. Likely operates as a K(+):H(+) symporter. The protein is Probable potassium transport system protein Kup of Verminephrobacter eiseniae (strain EF01-2).